A 278-amino-acid chain; its full sequence is Envelope glycoprotein L (278 aa).

A signal peptide spans 1–30 (MCRRPDCGFSFSPGPVVLLWCCLLLPIVSS). One can recognise a gL betaherpesvirus-type domain in the interval 43–256 (VPAECPELTR…DKYYAGLPPE (214 aa)). Cys-154 and Cys-159 are oxidised to a cystine.

Belongs to the herpesviridae glycoprotein L (gL) family. Betaherpesvirinae gL subfamily. Interacts with glycoprotein H (gH); this interaction is necessary for the correct processing and cell surface expression of gH. Forms the envelope pentamer complex (PC) composed of gH, gL, UL128, UL130, and UL131A. The pentamer interacts with host NRP2. Forms the envelope trimer complex composed of gH, gL, and gO. The trimer interacts with host PDGFRA.

Its subcellular location is the virion membrane. It is found in the host cell membrane. It localises to the host Golgi apparatus. The protein localises to the host trans-Golgi network. Its function is as follows. The heterodimer glycoprotein H-glycoprotein L is required for the fusion of viral and plasma membranes leading to virus entry into the host cell. Acts as a functional inhibitor of gH and maintains gH in an inhibited form. Upon binding to host integrins, gL dissociates from gH leading to activation of the viral fusion glycoproteins gB and gH. In human cytomegalovirus, forms two distincts complexes to mediate viral entry, a trimer and a pentamer at the surface of the virion envelope. The gH-gL-gO trimer is required for infection in fibroblasts by interacting with host PDGFRA. The gH-gL-UL128-UL130-UL131A pentamer is essential for viral entry in epithelial, endothelial and myeloid cells via interaction with host NRP2. This Human cytomegalovirus (strain AD169) (HHV-5) protein is Envelope glycoprotein L.